A 440-amino-acid chain; its full sequence is Ribulose bisphosphate carboxylase large chain (440 aa).

Lys4 bears the N6,N6,N6-trimethyllysine mark. Asn113 and Thr163 together coordinate substrate. The active-site Proton acceptor is Lys165. Residue Lys167 participates in substrate binding. The Mg(2+) site is built by Lys191, Asp193, and Glu194. At Lys191 the chain carries N6-carboxylysine. Catalysis depends on His284, which acts as the Proton acceptor. Substrate contacts are provided by Arg285, His317, and Ser369.

It belongs to the RuBisCO large chain family. Type I subfamily. Heterohexadecamer of 8 large chains and 8 small chains; disulfide-linked. The disulfide link is formed within the large subunit homodimers. The cofactor is Mg(2+). In terms of processing, the disulfide bond which can form in the large chain dimeric partners within the hexadecamer appears to be associated with oxidative stress and protein turnover.

It is found in the plastid. The protein resides in the chloroplast. The enzyme catalyses 2 (2R)-3-phosphoglycerate + 2 H(+) = D-ribulose 1,5-bisphosphate + CO2 + H2O. It catalyses the reaction D-ribulose 1,5-bisphosphate + O2 = 2-phosphoglycolate + (2R)-3-phosphoglycerate + 2 H(+). Functionally, ruBisCO catalyzes two reactions: the carboxylation of D-ribulose 1,5-bisphosphate, the primary event in carbon dioxide fixation, as well as the oxidative fragmentation of the pentose substrate in the photorespiration process. Both reactions occur simultaneously and in competition at the same active site. The sequence is that of Ribulose bisphosphate carboxylase large chain from Ptychomitrium gardneri (Gardner's ptychomitrium moss).